The following is a 576-amino-acid chain: 4-alpha-glucanotransferase DPE1, chloroplastic/amyloplastic (576 aa).

The N-terminal 45 residues, 1–45 (MSILLRPSSSPSLCSSLKLFRLSSPDSLIDAAVLRNRTKPSQSFR), are a transit peptide targeting the chloroplast.

Belongs to the disproportionating enzyme family.

Its subcellular location is the plastid. The protein resides in the chloroplast. It localises to the amyloplast. It carries out the reaction Transfers a segment of a (1-&gt;4)-alpha-D-glucan to a new position in an acceptor, which may be glucose or a (1-&gt;4)-alpha-D-glucan.. Functionally, chloroplastic alpha-glucanotransferase involved in maltotriose metabolism. Probably uses maltotriose as substrate to transfer a maltosyl unit from one molecule to another, resulting in glucose and maltopentaose. The latter can then be further metabolized to maltose and maltotriose by beta-amylase. Required for normal starch degradation in leaves. The protein is 4-alpha-glucanotransferase DPE1, chloroplastic/amyloplastic (DPE1) of Arabidopsis thaliana (Mouse-ear cress).